The primary structure comprises 60 residues: Large ribosomal subunit protein uL30 (60 aa).

Belongs to the universal ribosomal protein uL30 family. In terms of assembly, part of the 50S ribosomal subunit.

The polypeptide is Large ribosomal subunit protein uL30 (Leifsonia xyli subsp. xyli (strain CTCB07)).